Here is a 116-residue protein sequence, read N- to C-terminus: Putative gamma-glutamylcyclotransferase PH0828 (116 aa).

13–16 (YGTL) lines the substrate pocket. Residue E76 is the Proton acceptor of the active site.

The protein belongs to the gamma-glutamylcyclotransferase family.

Putative gamma-glutamylcyclotransferase. This chain is Putative gamma-glutamylcyclotransferase PH0828, found in Pyrococcus horikoshii (strain ATCC 700860 / DSM 12428 / JCM 9974 / NBRC 100139 / OT-3).